A 508-amino-acid chain; its full sequence is Photosystem II CP47 reaction center protein (508 aa).

Transmembrane regions (helical) follow at residues 21–36 (AVHI…WAGS), 101–115 (IVFS…IWHW), 140–156 (GIHL…FGAF), 203–218 (IAAG…FHLS), 237–252 (VLSS…AFVV), and 457–472 (SFAL…HGAR).

Belongs to the PsbB/PsbC family. PsbB subfamily. As to quaternary structure, PSII is composed of 1 copy each of membrane proteins PsbA, PsbB, PsbC, PsbD, PsbE, PsbF, PsbH, PsbI, PsbJ, PsbK, PsbL, PsbM, PsbT, PsbX, PsbY, PsbZ, Psb30/Ycf12, at least 3 peripheral proteins of the oxygen-evolving complex and a large number of cofactors. It forms dimeric complexes. It depends on Binds multiple chlorophylls. PSII binds additional chlorophylls, carotenoids and specific lipids. as a cofactor.

Its subcellular location is the plastid. The protein resides in the chloroplast thylakoid membrane. One of the components of the core complex of photosystem II (PSII). It binds chlorophyll and helps catalyze the primary light-induced photochemical processes of PSII. PSII is a light-driven water:plastoquinone oxidoreductase, using light energy to abstract electrons from H(2)O, generating O(2) and a proton gradient subsequently used for ATP formation. The polypeptide is Photosystem II CP47 reaction center protein (Daucus carota (Wild carrot)).